The primary structure comprises 427 residues: Enolase (427 aa).

Gln163 contacts (2R)-2-phosphoglycerate. Catalysis depends on Glu205, which acts as the Proton donor. Residues Asp242, Glu285, and Asp312 each coordinate Mg(2+). (2R)-2-phosphoglycerate is bound by residues Lys337, Arg366, Ser367, and Lys388. Residue Lys337 is the Proton acceptor of the active site.

It belongs to the enolase family. Mg(2+) is required as a cofactor.

The protein localises to the cytoplasm. It is found in the secreted. Its subcellular location is the cell surface. The catalysed reaction is (2R)-2-phosphoglycerate = phosphoenolpyruvate + H2O. It functions in the pathway carbohydrate degradation; glycolysis; pyruvate from D-glyceraldehyde 3-phosphate: step 4/5. In terms of biological role, catalyzes the reversible conversion of 2-phosphoglycerate (2-PG) into phosphoenolpyruvate (PEP). It is essential for the degradation of carbohydrates via glycolysis. The protein is Enolase of Burkholderia vietnamiensis (strain G4 / LMG 22486) (Burkholderia cepacia (strain R1808)).